The chain runs to 590 residues: Probable serine/threonine-protein phosphatase PP2A regulatory subunit (590 aa).

14 HEAT repeats span residues 37–73 (LSTI…VLAE), 74–111 (QLGN…DKAV), 113–150 (SLRK…TSAC), 151–188 (GLFS…RAAA), 189–227 (AKLG…LLTV), 228–266 (ESAI…YMVA), 267–305 (EKLI…CAAT), 306–344 (QRLQ…QLVK), 349–387 (GVIM…LNII), 388–426 (SSLD…LAIV), 427–465 (QFMP…EAST), 466–504 (LIMK…MTCL), 505–543 (FCLN…FNAA), and 544–582 (KSLK…YFSE).

This sequence belongs to the phosphatase 2A regulatory subunit A family. In terms of assembly, part of a complex consisting of a common heterodimeric core enzyme, composed of catalytic subunit let-92 and constant regulatory subunit paa-1, that associates with a variety of regulatory subunits which confer distinct properties to the holoenzyme. Interacts with rsa-1.

The protein localises to the cytoplasm. It localises to the cytoskeleton. The protein resides in the microtubule organizing center. Its subcellular location is the centrosome. It is found in the spindle. Its function is as follows. Acts as a scaffolding protein for phosphatase let-92 and its regulatory subunits. Probably together with let-92 and regulatory subunit sur-6, regulates centriole duplication, microtubule outgrowth and mitotic spindle stability during early embryonic cell division by preventing the degradation of sas-5 and kinase zyg-1. During vulva development, may play a role with phosphatase let-92 and regulatory subunit sur-6 in the induction of vulva cell precursors by positively regulating let-60/Ras-MAP kinase signaling, probably by promoting lin-45 activation. Plays a positive role in axon guidance probably by inhibiting phosphatase let-92. In Caenorhabditis elegans, this protein is Probable serine/threonine-protein phosphatase PP2A regulatory subunit (paa-1).